We begin with the raw amino-acid sequence, 458 residues long: Argininosuccinate lyase (458 aa).

Belongs to the lyase 1 family. Argininosuccinate lyase subfamily.

The protein resides in the cytoplasm. It carries out the reaction 2-(N(omega)-L-arginino)succinate = fumarate + L-arginine. It participates in amino-acid biosynthesis; L-arginine biosynthesis; L-arginine from L-ornithine and carbamoyl phosphate: step 3/3. This Neisseria meningitidis serogroup C (strain 053442) protein is Argininosuccinate lyase.